We begin with the raw amino-acid sequence, 207 residues long: Holliday junction branch migration complex subunit RuvA (207 aa).

Residues 1–64 (MIGRLRGNLL…EDAQLLYGFN (64 aa)) are domain I. Residues 65–143 (TKNERALFRE…GWGAGDLFTP (79 aa)) are domain II. The segment at 144–158 (ATDAAPMDDGSEFIT) is flexible linker. The tract at residues 159 to 207 (SPQSAVDEAVSALIALGYKPQQASKTVSQIAKPDMTSEVLIRESLKSMI) is domain III.

This sequence belongs to the RuvA family. As to quaternary structure, homotetramer. Forms an RuvA(8)-RuvB(12)-Holliday junction (HJ) complex. HJ DNA is sandwiched between 2 RuvA tetramers; dsDNA enters through RuvA and exits via RuvB. An RuvB hexamer assembles on each DNA strand where it exits the tetramer. Each RuvB hexamer is contacted by two RuvA subunits (via domain III) on 2 adjacent RuvB subunits; this complex drives branch migration. In the full resolvosome a probable DNA-RuvA(4)-RuvB(12)-RuvC(2) complex forms which resolves the HJ.

Its subcellular location is the cytoplasm. The RuvA-RuvB-RuvC complex processes Holliday junction (HJ) DNA during genetic recombination and DNA repair, while the RuvA-RuvB complex plays an important role in the rescue of blocked DNA replication forks via replication fork reversal (RFR). RuvA specifically binds to HJ cruciform DNA, conferring on it an open structure. The RuvB hexamer acts as an ATP-dependent pump, pulling dsDNA into and through the RuvAB complex. HJ branch migration allows RuvC to scan DNA until it finds its consensus sequence, where it cleaves and resolves the cruciform DNA. The protein is Holliday junction branch migration complex subunit RuvA of Aliivibrio fischeri (strain ATCC 700601 / ES114) (Vibrio fischeri).